Reading from the N-terminus, the 86-residue chain is MSLLDYFKTKKKPSTAATAKERLQIIVAHQRGERDAPDYFPQMKQEIIEVIRKYVKVGADQVSVQLDQNDDNLSVLELNVTLPEQS.

The protein belongs to the MinE family.

Functionally, prevents the cell division inhibition by proteins MinC and MinD at internal division sites while permitting inhibition at polar sites. This ensures cell division at the proper site by restricting the formation of a division septum at the midpoint of the long axis of the cell. In Shewanella piezotolerans (strain WP3 / JCM 13877), this protein is Cell division topological specificity factor.